A 263-amino-acid chain; its full sequence is 4-hydroxy-tetrahydrodipicolinate reductase (263 aa).

Residues 8-13, aspartate 34, 99-101, and 125-128 contribute to the NAD(+) site; these read GASGRM, GTT, and SPNY. Histidine 157 functions as the Proton donor/acceptor in the catalytic mechanism. Histidine 158 serves as a coordination point for (S)-2,3,4,5-tetrahydrodipicolinate. Lysine 161 (proton donor) is an active-site residue. Residue 167–168 participates in (S)-2,3,4,5-tetrahydrodipicolinate binding; the sequence is GT.

This sequence belongs to the DapB family.

Its subcellular location is the cytoplasm. The catalysed reaction is (S)-2,3,4,5-tetrahydrodipicolinate + NAD(+) + H2O = (2S,4S)-4-hydroxy-2,3,4,5-tetrahydrodipicolinate + NADH + H(+). The enzyme catalyses (S)-2,3,4,5-tetrahydrodipicolinate + NADP(+) + H2O = (2S,4S)-4-hydroxy-2,3,4,5-tetrahydrodipicolinate + NADPH + H(+). Its pathway is amino-acid biosynthesis; L-lysine biosynthesis via DAP pathway; (S)-tetrahydrodipicolinate from L-aspartate: step 4/4. Its function is as follows. Catalyzes the conversion of 4-hydroxy-tetrahydrodipicolinate (HTPA) to tetrahydrodipicolinate. This is 4-hydroxy-tetrahydrodipicolinate reductase from Methanococcoides burtonii (strain DSM 6242 / NBRC 107633 / OCM 468 / ACE-M).